We begin with the raw amino-acid sequence, 351 residues long: MRFTTLSTAFLALAQNVYAFPIESDLSALDVTLSQVSDTRIKAVVKNTGAENVTFVHLNFFRDSAPVKKVSVYRENNEVVFDGIKRRFQLQGLASESLTTLEAGEVLEDEFDIATTTDLSSGGAITLRSNGLVPVVKDGAVTGYLPYSSNDLKLNIDGAKASTVTKALKPLDRRTKETCSNASRKSALEKALSNTVKLANAAATAARSGSASKFSEYFKTTSSSTRSVVAARLEAVAKEAQSASSGSTTYYCSDTLGYCETNVLAYTLPARNIIANCDIYYSYLPALAGTCHQQDQATTTLHEFTHAPGVYSPGTDDLGYGYSAATSLSSSQAVLNADSYALYANAINLGC.

Positions 1-19 (MRFTTLSTAFLALAQNVYA) are cleaved as a signal peptide. A propeptide spanning residues 20–174 (FPIESDLSAL…TKALKPLDRR (155 aa)) is cleaved from the precursor. N-linked (GlcNAc...) asparagine glycans are attached at residues Asn-52 and Asn-181. Residue His-302 coordinates Zn(2+). Residue Glu-303 is part of the active site. Zn(2+) contacts are provided by His-306 and Asp-317.

This sequence belongs to the peptidase M35 family. The cofactor is Zn(2+).

The enzyme catalyses Preferential cleavage of bonds with hydrophobic residues in P1'. Also 3-Asn-|-Gln-4 and 8-Gly-|-Ser-9 bonds in insulin B chain.. The protein is Penicillolysin (plnC) of Penicillium citrinum.